The chain runs to 396 residues: Mannonate dehydratase (396 aa).

Belongs to the mannonate dehydratase family. Requires Fe(2+) as cofactor. It depends on Mn(2+) as a cofactor.

It catalyses the reaction D-mannonate = 2-dehydro-3-deoxy-D-gluconate + H2O. Its pathway is carbohydrate metabolism; pentose and glucuronate interconversion. Functionally, catalyzes the dehydration of D-mannonate. The sequence is that of Mannonate dehydratase from Enterobacter sp. (strain 638).